The sequence spans 457 residues: Protein N-terminal amidase (457 aa).

Positions 19–453 (LKVLVIQLNP…EGAILREVQF (435 aa)) constitute a CN hydrolase domain. E63 serves as the catalytic Proton acceptor. Catalysis depends on K136, which acts as the Proton donor. The Nucleophile role is filled by C187.

This sequence belongs to the carbon-nitrogen hydrolase superfamily.

Functionally, deamidates N-terminal Asn and Gln. Component of a targeting complex in the N-end rule pathway. In Saccharomyces cerevisiae (strain ATCC 204508 / S288c) (Baker's yeast), this protein is Protein N-terminal amidase (NTA1).